Reading from the N-terminus, the 331-residue chain is UPF0194 membrane protein YbhG (331 aa).

An N-terminal signal peptide occupies residues 1–19 (MKKPVVIGLAIAAIVTVIA). Positions 107–208 (EEIAQAAAAV…LDLQDTTLIA (102 aa)) form a coiled coil.

It belongs to the UPF0194 family.

It is found in the periplasm. The protein is UPF0194 membrane protein YbhG of Salmonella arizonae (strain ATCC BAA-731 / CDC346-86 / RSK2980).